The sequence spans 748 residues: Transcription factor hmgR (748 aa).

Positions 24-59 form a DNA-binding region, zn(2)-C6 fungal-type; it reads CISCRQRKAKCDLGTGPDGLPLGPPCAKCRREQKPC. Disordered stretches follow at residues 108-142 and 661-683; these read SQEDSMIESDSLPETEQHRSGHPVTSEGSSNQIDL and RESTTRHSMVPPSYASATSDEHA.

Its subcellular location is the nucleus. In terms of biological role, transcription factor; part of the L-tyrosine degradation gene cluster that mediates the biosynthesis of the brownish pigment pyomelanin as an alternative melanin. Acts as a transcriptional activator for the genes of the tyrosine degradation cluster. This Aspergillus fumigatus (strain ATCC MYA-4609 / CBS 101355 / FGSC A1100 / Af293) (Neosartorya fumigata) protein is Transcription factor hmgR.